The primary structure comprises 843 residues: Protein P (843 aa).

Residues 1 to 177 are terminal protein domain (TP); that stretch reads MPLSYQHFRK…FCGSPYSWEQ (177 aa). The tract at residues 178–346 is spacer; sequence ELQHGRLVFQ…YCLSHLINLH (169 aa). Disordered stretches follow at residues 218-243 and 291-315; these read LKQS…SGSI and TAQR…AGSQ. The segment at 347 to 690 is polymerase/reverse transcriptase domain (RT); the sequence is EDWGPCIEHG…YLNLYPVARQ (344 aa). The Reverse transcriptase domain occupies 357–600; that stretch reads EHNIRIPRTP…YSLNFMGYVI (244 aa). Residues D429, D551, and D552 each coordinate Mg(2+).

This sequence belongs to the hepadnaviridae P protein family.

The catalysed reaction is DNA(n) + a 2'-deoxyribonucleoside 5'-triphosphate = DNA(n+1) + diphosphate. It catalyses the reaction Endonucleolytic cleavage to 5'-phosphomonoester.. Activated by host HSP70 and HSP40 in vitro to be able to bind the epsilon loop of the pgRNA. Because deletion of the RNase H region renders the protein partly chaperone-independent, the chaperones may be needed indirectly to relieve occlusion of the RNA-binding site by this domain. Inhibited by several reverse-transcriptase inhibitors: Lamivudine, Adefovir and Entecavir. Its function is as follows. Multifunctional enzyme that converts the viral RNA genome into dsDNA in viral cytoplasmic capsids. This enzyme displays a DNA polymerase activity that can copy either DNA or RNA templates, and a ribonuclease H (RNase H) activity that cleaves the RNA strand of RNA-DNA heteroduplexes in a partially processive 3'- to 5'-endonucleasic mode. Neo-synthesized pregenomic RNA (pgRNA) are encapsidated together with the P protein, and reverse-transcribed inside the nucleocapsid. Initiation of reverse-transcription occurs first by binding the epsilon loop on the pgRNA genome, and is initiated by protein priming, thereby the 5'-end of (-)DNA is covalently linked to P protein. Partial (+)DNA is synthesized from the (-)DNA template and generates the relaxed circular DNA (RC-DNA) genome. After budding and infection, the RC-DNA migrates in the nucleus, and is converted into a plasmid-like covalently closed circular DNA (cccDNA). The activity of P protein does not seem to be necessary for cccDNA generation, and is presumably released from (+)DNA by host nuclear DNA repair machinery. The protein is Protein P of Hepatitis B virus genotype C subtype ayw (isolate Australia/AustRC/1992) (HBV-C).